The chain runs to 200 residues: Recombination protein RecR (200 aa).

The segment at Cys59 to Cys74 adopts a C4-type zinc-finger fold. Positions Ser82–Pro177 constitute a Toprim domain.

Belongs to the RecR family.

In terms of biological role, may play a role in DNA repair. It seems to be involved in an RecBC-independent recombinational process of DNA repair. It may act with RecF and RecO. In Bifidobacterium longum subsp. infantis (strain ATCC 15697 / DSM 20088 / JCM 1222 / NCTC 11817 / S12), this protein is Recombination protein RecR.